The sequence spans 975 residues: Nesprin-3 (975 aa).

At Met-1–Arg-925 the chain is on the cytoplasmic side. Spectrin repeat units follow at residues Gln-220–Gly-325 and Arg-647–Arg-740. A disordered region spans residues Leu-778–His-798. Residues Cys-917–Thr-975 form the KASH domain. Residues Val-926 to Ala-946 traverse the membrane as a helical; Anchor for type IV membrane protein segment. Residues Gly-947–Thr-975 lie on the Perinuclear space side of the membrane.

Belongs to the nesprin family. As to quaternary structure, core component of LINC complexes which are composed of inner nuclear membrane SUN domain-containing proteins coupled to outer nuclear membrane KASH domain-containing nesprins. SUN and KASH domain-containing proteins seem to bind each other promiscuously; however, differentially expression of LINC complex constituents can give rise to specific assemblies. Interacts with SUN1 and SUN2; probably forming respective LINC complexes. Interacts with PLEC (via actin-binding domain). Interacts with DST. Interacts with SYNE1. Interacts (via KASH domain) with TOR1A (ATP-bound); the interaction is required for SYNE3 nuclear envelope localization. In terms of processing, the disulfid bond with SUN1 or SUN2 is required for stability of the respective LINC complex under tensile forces. Ubiquitous.

It localises to the nucleus outer membrane. The protein resides in the nucleus envelope. It is found in the rough endoplasmic reticulum. Functionally, as a component of the LINC (LInker of Nucleoskeleton and Cytoskeleton) complex involved in the connection between the nuclear lamina and the cytoskeleton. The nucleocytoplasmic interactions established by the LINC complex play an important role in the transmission of mechanical forces across the nuclear envelope and in nuclear movement and positioning. Probable anchoring protein which tethers the nucleus to the cytoskeleton by binding PLEC which can associate with the intermediate filament system. Plays a role in the regulation of aortic epithelial cell morphology, and is required for flow-induced centrosome polarization and directional migration in aortic endothelial cells. This Mus musculus (Mouse) protein is Nesprin-3 (Syne3).